The sequence spans 801 residues: Glycerol-3-phosphate acyltransferase 2, mitochondrial (801 aa).

The interval 1–24 (MDTMLKSNPQTQQRSNHNGQETSL) is disordered. The Cytoplasmic segment spans residues 1 to 305 (MDTMLKSNPQ…PGPRLSALGQ (305 aa)). Positions 180–290 (QLHKGQMKMV…SGQPLLIFLE (111 aa)) are acyltransferase. The HXXXXD motif signature appears at 205–210 (HKSLLD). A helical membrane pass occupies residues 306–332 (AWLGVVIQAVQAGIISDATLVPVAIAY). Residues 333-449 (DLVPDAPCNM…QLLVRRLSRH (117 aa)) are Mitochondrial intermembrane-facing. A helical transmembrane segment spans residues 450-472 (VLSASVASSAVMSTAIMATLLLL). Residues 473–801 (KHQKGVVLSQ…EQFIRQFICS (329 aa)) lie on the Cytoplasmic side of the membrane. Position 662 is a phosphoserine (Ser-662). Phosphothreonine is present on Thr-666. Phosphoserine occurs at positions 668 and 670.

Belongs to the GPAT/DAPAT family. In terms of assembly, interacts with PIWIL2. Highly expressed in the testis. Expressed at lower levels in the heart, liver, kidney, spleen and adipose cells. Only detected in primary spermatocytes.

It localises to the mitochondrion outer membrane. It catalyses the reaction sn-glycerol 3-phosphate + an acyl-CoA = a 1-acyl-sn-glycero-3-phosphate + CoA. The enzyme catalyses a 1-acyl-sn-glycero-3-phosphate + an acyl-CoA = a 1,2-diacyl-sn-glycero-3-phosphate + CoA. It carries out the reaction 1-(9Z-octadecenoyl)-sn-glycero-3-phosphate + (9Z)-octadecenoyl-CoA = 1,2-di-(9Z-octadecenoyl)-sn-glycero-3-phosphate + CoA. The catalysed reaction is 1-(9Z-octadecenoyl)-sn-glycero-3-phosphate + (5Z,8Z,11Z,14Z)-eicosatetraenoyl-CoA = 1-(9Z)-octadecenoyl-2-(5Z,8Z,11Z,14Z)-eicosatetraenoyl-sn-glycero-3-phosphate + CoA. It catalyses the reaction (5Z,8Z,11Z,14Z)-eicosatetraenoyl-CoA + sn-glycerol 3-phosphate = 1-(5Z,8Z,11Z,14Z-eicosatetraenoyl)-sn-glycero-3-phosphate + CoA. It participates in phospholipid metabolism; CDP-diacylglycerol biosynthesis; CDP-diacylglycerol from sn-glycerol 3-phosphate: step 1/3. With respect to regulation, inhibited by N-ethylmaleimide (NEM). Functionally, transfers an acyl-group from acyl-ACP to the sn-1 position of glycerol-3-phosphate producing a lysophosphatidic acid (LPA), an essential step for the triacylglycerol (TAG) and glycerophospholipids. In vitro also transfers an acyl-group from acyl-ACP to the LPA producing a phosphatidic acid (PA). Prefers arachidonoyl-CoA as the acyl donor. Required for primary processing step during piRNA biosynthesis. Molecular mechanisms by which it promotes piRNA biosynthesis are unclear and do not involve its acyltransferase activity. The polypeptide is Glycerol-3-phosphate acyltransferase 2, mitochondrial (Mus musculus (Mouse)).